The chain runs to 198 residues: Na(+)-translocating NADH-quinone reductase subunit E (198 aa).

6 helical membrane passes run 11–31 (SVFI…FLAV), 35–55 (VSTS…AVPV), 77–97 (FLNF…LEMF), 110–130 (GIFL…SFMV), 140–160 (VVYG…LAGL), and 176–196 (LGIT…FSGI).

This sequence belongs to the NqrDE/RnfAE family. As to quaternary structure, composed of six subunits; NqrA, NqrB, NqrC, NqrD, NqrE and NqrF.

It is found in the cell inner membrane. It carries out the reaction a ubiquinone + n Na(+)(in) + NADH + H(+) = a ubiquinol + n Na(+)(out) + NAD(+). In terms of biological role, NQR complex catalyzes the reduction of ubiquinone-1 to ubiquinol by two successive reactions, coupled with the transport of Na(+) ions from the cytoplasm to the periplasm. NqrA to NqrE are probably involved in the second step, the conversion of ubisemiquinone to ubiquinol. The chain is Na(+)-translocating NADH-quinone reductase subunit E from Actinobacillus succinogenes (strain ATCC 55618 / DSM 22257 / CCUG 43843 / 130Z).